A 176-amino-acid chain; its full sequence is Calcium and integrin-binding family member 2 (176 aa).

EF-hand domains are found at residues 55-90 (RENP…LCES), 92-127 (PRDL…LTKS), and 133-168 (EVVL…APDF). Ca(2+) contacts are provided by D105, N107, D109, D116, D146, D148, D150, K152, and D157.

As to quaternary structure, monomer. Homodimer. Interacts with WHRN and MYO7A. Interacts with ITGA2B (via C-terminus cytoplasmic tail region); the interactions are stabilized/increased in a calcium and magnesium-dependent manner. Interacts with ITGA7 (via C-terminus cytoplasmic tail region); the interactions are stabilized/increased in a calcium and magnesium-dependent manner. Interacts with TMC1. Interacts with TMC2. As to expression, expressed in liver, heart, kidney, brain, spleen, stomach, ovary, testis and muscle.

The protein resides in the cytoplasm. It is found in the cell projection. The protein localises to the stereocilium. It localises to the photoreceptor inner segment. Its subcellular location is the cilium. The protein resides in the photoreceptor outer segment. It is found in the cell membrane. The protein localises to the sarcolemma. In terms of biological role, calcium- and integrin-binding protein that plays a role in intracellular calcium homeostasis. Acts as an auxiliary subunit of the sensory mechanoelectrical transduction (MET) channel in hair cells. Essential for mechanoelectrical transduction (MET) currents in auditory hair cells and thereby required for hearing. Regulates the function of hair cell mechanotransduction by controlling the distribution of transmembrane channel-like proteins TMC1 and TMC2, and by regulating the function of the MET channels in hair cells. Required for the maintenance of auditory hair cell stereocilia bundle morphology and function and for hair-cell survival in the cochlea. Critical for proper photoreceptor cell maintenance and function. Plays a role in intracellular calcium homeostasis by decreasing ATP-induced calcium release. This is Calcium and integrin-binding family member 2 (CIB2) from Ovis aries (Sheep).